The primary structure comprises 729 residues: Replication restart protein PriA (729 aa).

The 168-residue stretch at 209-376 (QTALGRFRSF…QSGAYRLLQL (168 aa)) folds into the Helicase ATP-binding domain. 222–229 (GITGSGKT) is a binding site for ATP. The DEAH box motif lies at 319–322 (DEEH). Zn(2+) is bound by residues Cys436, Cys439, Cys445, Cys448, Cys463, Cys466, Cys476, and Cys479. One can recognise a Helicase C-terminal domain in the interval 471 to 623 (PIPFKCPDCG…YAVFAENELN (153 aa)).

The protein belongs to the helicase family. PriA subfamily. Interacts with PriB with high affinity in the absence of DNA. Component of the replication restart primosome. It depends on Zn(2+) as a cofactor.

The catalysed reaction is Couples ATP hydrolysis with the unwinding of duplex DNA by translocating in the 3'-5' direction.. It carries out the reaction ATP + H2O = ADP + phosphate + H(+). Its activity is regulated as follows. Helicase and ATPase activities on forked DNA are stimulated by PriB; E.coli PriB does not stimulate this helicase. PriA:PriB complex-catalyzed duplex DNA winding is inhibited by CGS 15943 (CHEBI:131351). CGS 15943 decreases ATP hydrolysis and decreases PriA's affinity for DNA. In terms of biological role, initiates the restart of stalled replication forks, which reloads the replicative helicase on sites other than the origin of replication. Recognizes and binds to abandoned replication forks and remodels them to uncover a helicase loading site. Promotes assembly of the primosome at these replication forks. Its function is as follows. DNA helicase with greatest unwinding activity on forked DNA substrates with relatively short duplex lagging strand arms. A DNA-dependent ATPase. Required for DNA transformation and DNA repair. Binds single-stranded (ss)DNA and replication fork-like DNA but not double-stranded (ds)DNA. This chain is Replication restart protein PriA, found in Neisseria gonorrhoeae (strain ATCC 700825 / FA 1090).